The following is a 151-amino-acid chain: UPF0208 membrane protein YfbV (151 aa).

A run of 2 helical transmembrane segments spans residues 46-65 and 69-91; these read YAIR…QIAL and LGPA…WWLG.

It belongs to the UPF0208 family.

The protein localises to the cell inner membrane. This is UPF0208 membrane protein YfbV from Shigella flexneri serotype 5b (strain 8401).